The primary structure comprises 336 residues: 3-isopropylmalate dehydrogenase (336 aa).

Substrate-binding residues include Arg-87, Arg-97, Arg-121, and Asp-211. The Mg(2+) site is built by Asp-211, Asp-235, and Asp-239. 271-283 (GSAPDIAGQGVAD) contributes to the NAD(+) binding site.

The protein belongs to the isocitrate and isopropylmalate dehydrogenases family. LeuB type 2 subfamily. In terms of assembly, homodimer. Mg(2+) serves as cofactor. Mn(2+) is required as a cofactor.

It localises to the cytoplasm. The catalysed reaction is (2R,3S)-3-isopropylmalate + NAD(+) = 4-methyl-2-oxopentanoate + CO2 + NADH. It participates in amino-acid biosynthesis; L-leucine biosynthesis; L-leucine from 3-methyl-2-oxobutanoate: step 3/4. Functionally, catalyzes the oxidation of 3-carboxy-2-hydroxy-4-methylpentanoate (3-isopropylmalate) to 3-carboxy-4-methyl-2-oxopentanoate. The product decarboxylates to 4-methyl-2 oxopentanoate. This Mycobacterium avium (strain 104) protein is 3-isopropylmalate dehydrogenase.